We begin with the raw amino-acid sequence, 345 residues long: BAG family molecular chaperone regulator 1 (345 aa).

Residues 1-137 (MAQRGGARRP…STRSEEVTRE (137 aa)) are disordered. The span at 68 to 80 (RRPRMKKKTRRRS) shows a compositional bias: basic residues. Basic and acidic residues predominate over residues 81 to 91 (TRSEELTRSEE). A compositionally biased stretch (low complexity) spans 95–114 (SEEATWSEEATQSEEATQGE). 7 consecutive repeat copies span residues 96 to 101 (EEATWS), 102 to 107 (EEATQS), 108 to 113 (EEATQG), 114 to 119 (EEMNRS), 120 to 125 (QEVTRD), 126 to 131 (EESTRS), and 132 to 137 (EEVTRE). The tract at residues 96–137 (EEATWSEEATQSEEATQGEEMNRSQEVTRDEESTRSEEVTRE) is 7 X 6 AA tandem repeat of E-E-X(4). Positions 115–137 (EMNRSQEVTRDEESTRSEEVTRE) are enriched in basic and acidic residues. The Ubiquitin-like domain maps to 144–224 (LTVTVTHSNE…VMLIGKKNSP (81 aa)). An interaction with HSPA8 region spans residues 172-219 (DLAQVVEEVIGVPQSFQKLIFKGKSLKEMETPLSALGIQDGCRVMLIG). The segment at 216–345 (MLIGKKNSPQ…LQSTNFALAE (130 aa)) is interaction with PPP1R15A. Position 223 is a phosphoserine (Ser-223). Residues 246–326 (QLEELNKELT…AFLAECDTVE (81 aa)) form the BAG domain.

Homodimer. Forms a heteromeric complex with HSP70/HSC70. Binds to the ATPase domain of HSP/HSC70 chaperones. Isoform 1, isoform 3 and isoform 4 but not isoform 2 interact with HSPA8/HSC70. Interacts with NR3C1. Interacts with the N-terminal region of MAPRE2. Interacts with PPP1R15A. Interacts with BCL2 in an ATP-dependent manner. Isoform 2 does not interact with BCL2. Interacts with SIAH1. Interacts with HSPA8 (via NBD). Interacts with HSPA1A (via NBD) and HSPA1B (via NBD). Interacts with SIAH2. Interacts with ESR1; the interaction is promoted in the absence of estradiol (17-beta-estradiol/E2). Ubiquitinated; mediated by SIAH1 or SIAH2 and leading to its subsequent proteasomal degradation. In terms of tissue distribution, isoform 4 is the most abundantly expressed isoform. It is ubiquitously expressed throughout most tissues, except the liver, colon, breast and uterine myometrium. Isoform 1 is expressed in the ovary and testis. Isoform 4 is expressed in several types of tumor cell lines, and at consistently high levels in leukemia and lymphoma cell lines. Isoform 1 is expressed in the prostate, breast and leukemia cell lines. Isoform 3 is the least abundant isoform in tumor cell lines (at protein level).

The protein resides in the nucleus. It localises to the cytoplasm. Functionally, co-chaperone for HSP70 and HSC70 chaperone proteins. Acts as a nucleotide-exchange factor (NEF) promoting the release of ADP from the HSP70 and HSC70 proteins thereby triggering client/substrate protein release. Nucleotide release is mediated via its binding to the nucleotide-binding domain (NBD) of HSPA8/HSC70 where as the substrate release is mediated via its binding to the substrate-binding domain (SBD) of HSPA8/HSC70. Inhibits the pro-apoptotic function of PPP1R15A, and has anti-apoptotic activity. Markedly increases the anti-cell death function of BCL2 induced by various stimuli. Involved in the STUB1-mediated proteasomal degradation of ESR1 in response to age-related circulating estradiol (17-beta-estradiol/E2) decline, thereby promotes neuronal apoptosis in response to ischemic reperfusion injury. The chain is BAG family molecular chaperone regulator 1 (BAG1) from Homo sapiens (Human).